A 243-amino-acid chain; its full sequence is Probable transcriptional regulatory protein BAPKO_0024/BafPKo_0025 (243 aa).

Belongs to the TACO1 family.

The protein resides in the cytoplasm. The protein is Probable transcriptional regulatory protein BAPKO_0024/BafPKo_0025 of Borreliella afzelii (strain PKo) (Borrelia afzelii).